Here is a 390-residue protein sequence, read N- to C-terminus: Succinate--CoA ligase [ADP-forming] subunit beta (390 aa).

The region spanning 9 to 248 (KEILRRHKAN…ITEEDPLEVQ (240 aa)) is the ATP-grasp domain. Residues Lys-50, 57-59 (GRG), Glu-103, Ile-106, and Glu-111 each bind ATP. Mg(2+)-binding residues include Asn-203 and Asp-217. Residues Asn-268 and 325–327 (GIV) each bind substrate.

Belongs to the succinate/malate CoA ligase beta subunit family. Heterotetramer of two alpha and two beta subunits. Requires Mg(2+) as cofactor.

The catalysed reaction is succinate + ATP + CoA = succinyl-CoA + ADP + phosphate. It catalyses the reaction GTP + succinate + CoA = succinyl-CoA + GDP + phosphate. It functions in the pathway carbohydrate metabolism; tricarboxylic acid cycle; succinate from succinyl-CoA (ligase route): step 1/1. In terms of biological role, succinyl-CoA synthetase functions in the citric acid cycle (TCA), coupling the hydrolysis of succinyl-CoA to the synthesis of either ATP or GTP and thus represents the only step of substrate-level phosphorylation in the TCA. The beta subunit provides nucleotide specificity of the enzyme and binds the substrate succinate, while the binding sites for coenzyme A and phosphate are found in the alpha subunit. The sequence is that of Succinate--CoA ligase [ADP-forming] subunit beta from Leptospira borgpetersenii serovar Hardjo-bovis (strain JB197).